Consider the following 69-residue polypeptide: Metallothionein-like protein 3 (69 aa).

It belongs to the metallothionein superfamily. Type 15 family. As to expression, expressed in leaf mesophyll cells, root tips, and at low levels in anthers.

Its function is as follows. Metallothioneins have a high content of cysteine residues that bind various heavy metals. Functions as a metal chelator of copper (Cu) and zinc (Zn). Plays a role in Cu homeostasis, specifically in the remobilization of Cu from senescing leaves. The mobilization of Cu from internal sources is important for seed development. The sequence is that of Metallothionein-like protein 3 from Arabidopsis thaliana (Mouse-ear cress).